The following is a 93-amino-acid chain: 3-isopropylmalate dehydratase small subunit (93 aa).

The protein belongs to the LeuD family. LeuD type 1 subfamily. Heterodimer of LeuC and LeuD.

The catalysed reaction is (2R,3S)-3-isopropylmalate = (2S)-2-isopropylmalate. It functions in the pathway amino-acid biosynthesis; L-leucine biosynthesis; L-leucine from 3-methyl-2-oxobutanoate: step 2/4. Catalyzes the isomerization between 2-isopropylmalate and 3-isopropylmalate, via the formation of 2-isopropylmaleate. This chain is 3-isopropylmalate dehydratase small subunit (leuD), found in Actinoplanes teichomyceticus.